Reading from the N-terminus, the 31-residue chain is Cytochrome b6-f complex subunit 6 (31 aa).

The chain crosses the membrane as a helical span at residues 3-23; it reads TITSYFGFLLAVLTITSGLFI.

Belongs to the PetL family. The 4 large subunits of the cytochrome b6-f complex are cytochrome b6, subunit IV (17 kDa polypeptide, PetD), cytochrome f and the Rieske protein, while the 4 small subunits are PetG, PetL, PetM and PetN. The complex functions as a dimer.

The protein resides in the plastid. The protein localises to the chloroplast thylakoid membrane. In terms of biological role, component of the cytochrome b6-f complex, which mediates electron transfer between photosystem II (PSII) and photosystem I (PSI), cyclic electron flow around PSI, and state transitions. PetL is important for photoautotrophic growth as well as for electron transfer efficiency and stability of the cytochrome b6-f complex. The sequence is that of Cytochrome b6-f complex subunit 6 from Lotus japonicus (Lotus corniculatus var. japonicus).